The chain runs to 108 residues: ATP-dependent Clp protease adapter protein ClpS (108 aa).

This sequence belongs to the ClpS family. In terms of assembly, binds to the N-terminal domain of the chaperone ClpA.

Functionally, involved in the modulation of the specificity of the ClpAP-mediated ATP-dependent protein degradation. The chain is ATP-dependent Clp protease adapter protein ClpS from Cupriavidus necator (strain ATCC 17699 / DSM 428 / KCTC 22496 / NCIMB 10442 / H16 / Stanier 337) (Ralstonia eutropha).